A 600-amino-acid polypeptide reads, in one-letter code: Chaperone protein DnaK (600 aa).

Position 175 is a phosphothreonine; by autocatalysis (Thr-175). A compositionally biased stretch (low complexity) spans 569–578 (SFAQATAQQA). Residues 569–600 (SFAQATAQQANTSESDPKADDSNTIDAEIKQD) form a disordered region. A compositionally biased stretch (basic and acidic residues) spans 583–600 (SDPKADDSNTIDAEIKQD).

This sequence belongs to the heat shock protein 70 family.

Acts as a chaperone. The sequence is that of Chaperone protein DnaK from Mesomycoplasma hyopneumoniae (strain J / ATCC 25934 / NCTC 10110) (Mycoplasma hyopneumoniae).